Consider the following 180-residue polypeptide: Probable DNA replication complex GINS protein PSF2 (180 aa).

This sequence belongs to the GINS2/PSF2 family. Component of the GINS complex which is a heterotetramer of gins1, gins2, gins3 and gins4.

The protein localises to the nucleus. Required for correct functioning of the GINS complex, a complex that plays an essential role in the initiation of DNA replication, and progression of DNA replication forks. GINS complex is a core component of CDC45-MCM-GINS (CMG) helicase, the molecular machine that unwinds template DNA during replication, and around which the replisome is built. In Caenorhabditis elegans, this protein is Probable DNA replication complex GINS protein PSF2 (psf-2).